The sequence spans 170 residues: Ergosterol biosynthetic protein 28 (170 aa).

3 consecutive transmembrane segments (helical) span residues Phe7 to Ile27, Thr116 to Phe136, and Phe141 to Leu161.

This sequence belongs to the ERG28 family. Heterotetramer of ERG25, ERG26, ERG27 and ERG28. ERG28 acts as a scaffold to tether ERG27 and other 4,4-demethylation-related enzymes, forming a demethylation enzyme complex, in the endoplasmic reticulum.

It is found in the endoplasmic reticulum membrane. Its pathway is steroid metabolism; ergosterol biosynthesis. Its function is as follows. Sterol 24-C-methyltransferase; part of the third module of ergosterol biosynthesis pathway that includes the late steps of the pathway. ERG28 has a role as a scaffold to help anchor the catalytic components of the C-4 demethylation complex ERG25, ERG26 and ERG27 to the endoplasmic reticulum. The third module or late pathway involves the ergosterol synthesis itself through consecutive reactions that mainly occur in the endoplasmic reticulum (ER) membrane. Firstly, the squalene synthase ERG9 catalyzes the condensation of 2 farnesyl pyrophosphate moieties to form squalene, which is the precursor of all steroids. Squalene synthase is crucial for balancing the incorporation of farnesyl diphosphate (FPP) into sterol and nonsterol isoprene synthesis. Secondly, squalene is converted into lanosterol by the consecutive action of the squalene epoxidase ERG1 and the lanosterol synthase ERG7. Then, the delta(24)-sterol C-methyltransferase ERG6 methylates lanosterol at C-24 to produce eburicol. Eburicol is the substrate of the sterol 14-alpha demethylase encoded by CYP51A, CYP51B and CYP51C, to yield 4,4,24-trimethyl ergosta-8,14,24(28)-trienol. CYP51B encodes the enzyme primarily responsible for sterol 14-alpha-demethylation, and plays an essential role in ascospore formation. CYP51A encodes an additional sterol 14-alpha-demethylase, induced on ergosterol depletion and responsible for the intrinsic variation in azole sensitivity. The third CYP51 isoform, CYP51C, does not encode a sterol 14-alpha-demethylase, but is required for full virulence on host wheat ears. The C-14 reductase ERG24 then reduces the C14=C15 double bond which leads to 4,4-dimethylfecosterol. A sequence of further demethylations at C-4, involving the C-4 demethylation complex containing the C-4 methylsterol oxidases ERG25, the sterol-4-alpha-carboxylate 3-dehydrogenase ERG26 and the 3-keto-steroid reductase ERG27, leads to the production of fecosterol via 4-methylfecosterol. ERG28 has a role as a scaffold to help anchor ERG25, ERG26 and ERG27 to the endoplasmic reticulum. The C-8 sterol isomerase ERG2 then catalyzes the reaction which results in unsaturation at C-7 in the B ring of sterols and thus converts fecosterol to episterol. The sterol-C5-desaturases ERG3A and ERG3BB then catalyze the introduction of a C-5 double bond in the B ring to produce 5-dehydroepisterol. The C-22 sterol desaturases ERG5A and ERG5B further convert 5-dehydroepisterol into ergosta-5,7,22,24(28)-tetraen-3beta-ol by forming the C-22(23) double bond in the sterol side chain. Finally, ergosta-5,7,22,24(28)-tetraen-3beta-ol is substrate of the C-24(28) sterol reductase ERG4 to produce ergosterol. The polypeptide is Ergosterol biosynthetic protein 28 (Gibberella zeae (strain ATCC MYA-4620 / CBS 123657 / FGSC 9075 / NRRL 31084 / PH-1) (Wheat head blight fungus)).